A 310-amino-acid chain; its full sequence is Protoheme IX farnesyltransferase (310 aa).

The next 9 membrane-spanning stretches (helical) occupy residues Leu21–Val43, Met48–Trp70, Gly95–Ala115, Leu118–Trp138, Ile147–Gly167, Leu174–Phe194, Val220–Gly240, Leu243–Trp263, and Leu289–Gly309.

This sequence belongs to the UbiA prenyltransferase family. Protoheme IX farnesyltransferase subfamily. Interacts with CtaA.

It localises to the cell inner membrane. It carries out the reaction heme b + (2E,6E)-farnesyl diphosphate + H2O = Fe(II)-heme o + diphosphate. It participates in porphyrin-containing compound metabolism; heme O biosynthesis; heme O from protoheme: step 1/1. In terms of biological role, converts heme B (protoheme IX) to heme O by substitution of the vinyl group on carbon 2 of heme B porphyrin ring with a hydroxyethyl farnesyl side group. In Cereibacter sphaeroides (strain KD131 / KCTC 12085) (Rhodobacter sphaeroides), this protein is Protoheme IX farnesyltransferase.